A 345-amino-acid chain; its full sequence is Probable fructokinase-3 (345 aa).

It belongs to the carbohydrate kinase PfkB family.

It catalyses the reaction D-fructose + ATP = D-fructose 6-phosphate + ADP + H(+). Its pathway is glycan biosynthesis; starch biosynthesis. In terms of biological role, may play an important role in maintaining the flux of carbon towards starch formation. The protein is Probable fructokinase-3 of Arabidopsis thaliana (Mouse-ear cress).